A 226-amino-acid polypeptide reads, in one-letter code: Ribonuclease 3 (226 aa).

The RNase III domain maps to methionine 6 to asparagine 128. Residue glutamate 41 participates in Mg(2+) binding. The active site involves aspartate 45. Mg(2+) is bound by residues asparagine 114 and glutamate 117. Glutamate 117 is a catalytic residue. The 71-residue stretch at aspartate 155–valine 225 folds into the DRBM domain.

Belongs to the ribonuclease III family. Homodimer. Requires Mg(2+) as cofactor.

The protein localises to the cytoplasm. The enzyme catalyses Endonucleolytic cleavage to 5'-phosphomonoester.. In terms of biological role, digests double-stranded RNA. Involved in the processing of primary rRNA transcript to yield the immediate precursors to the large and small rRNAs (23S and 16S). Processes some mRNAs, and tRNAs when they are encoded in the rRNA operon. Processes pre-crRNA and tracrRNA of type II CRISPR loci if present in the organism. In Buchnera aphidicola subsp. Cinara cedri (strain Cc), this protein is Ribonuclease 3.